We begin with the raw amino-acid sequence, 920 residues long: Plasma membrane ATPase (920 aa).

The tract at residues 1-77 (MADHSASGAP…TPGGGRVVPE (77 aa)) is disordered. The Cytoplasmic segment spans residues 1–115 (MADHSASGAP…KEEKENHFLK (115 aa)). Residues 38-51 (EDDEDEDIDALIED) show a composition bias toward acidic residues. Residues 116–138 (FLGFFVGPIQFVMEGAAVLAAGL) traverse the membrane as a helical segment. Topologically, residues 139-140 (ED) are extracellular. Residues 141-160 (WVDFGVICGLLLLNAVVGFV) traverse the membrane as a helical segment. The Cytoplasmic portion of the chain corresponds to 161–291 (QEFQAGSIVD…GSGHFTEVLN (131 aa)). Residues 292 to 314 (GIGTILLILVIFTLLIVWVSSFY) traverse the membrane as a helical segment. Over 315 to 321 (RSNPIVQ) the chain is Extracellular. Residues 322 to 354 (ILEFTLAITIIGVPVGLPAVVTTTMAVGAAYLA) form a helical membrane-spanning segment. Topologically, residues 355 to 687 (KKKAIVQKLS…LKTSRQIFHR (333 aa)) are cytoplasmic. The active-site 4-aspartylphosphate intermediate is the Asp-378. The Mg(2+) site is built by Asp-634 and Asp-638. The chain crosses the membrane as a helical span at residues 688-713 (MYAYVVYRIALSIHLEIFLGLWIAIL). At 714–720 (NRSLNIE) the chain is on the extracellular side. Residues 721-738 (LVVFIAIFADVATLAIAY) form a helical membrane-spanning segment. Topologically, residues 739 to 754 (DNAPYSQTPVKWNLPK) are cytoplasmic. Residues 755 to 779 (LWGMSVLLGVVLAVGTWITVTTMYA) traverse the membrane as a helical segment. Residues 780 to 806 (QGENGGIVQNFGNMDEVLFLQISLTEN) lie on the Extracellular side of the membrane. The next 2 helical transmembrane spans lie at 807 to 826 (WLIF…PSWQ) and 827 to 847 (LSGA…WGWF). The Extracellular portion of the chain corresponds to 848–853 (EHSDTS). Residues 854 to 878 (IVAVVRIWIFSFGIFCIMGGVYYIL) form a helical membrane-spanning segment. The Cytoplasmic segment spans residues 879-920 (QDSVGFDNLMHGKSPKGNQKQRSLEDFVVSLQRVSTQHEKSQ).

This sequence belongs to the cation transport ATPase (P-type) (TC 3.A.3) family. Type IIIA subfamily.

It localises to the cell membrane. The catalysed reaction is ATP + H2O + H(+)(in) = ADP + phosphate + 2 H(+)(out). Its function is as follows. The plasma membrane ATPase of plants and fungi is a hydrogen ion pump. The proton gradient it generates drives the active transport of nutrients by H(+)-symport. The resulting external acidification and/or internal alkinization may mediate growth responses. This Neurospora crassa (strain ATCC 24698 / 74-OR23-1A / CBS 708.71 / DSM 1257 / FGSC 987) protein is Plasma membrane ATPase (pma-1).